The following is a 96-amino-acid chain: Large ribosomal subunit protein uL23 (96 aa).

The protein belongs to the universal ribosomal protein uL23 family. Part of the 50S ribosomal subunit. Contacts protein L29, and trigger factor when it is bound to the ribosome.

Its function is as follows. One of the early assembly proteins it binds 23S rRNA. One of the proteins that surrounds the polypeptide exit tunnel on the outside of the ribosome. Forms the main docking site for trigger factor binding to the ribosome. This Alkaliphilus oremlandii (strain OhILAs) (Clostridium oremlandii (strain OhILAs)) protein is Large ribosomal subunit protein uL23.